Reading from the N-terminus, the 399-residue chain is P2X purinoceptor 1 (399 aa).

The Cytoplasmic portion of the chain corresponds to 1–28; that stretch reads MARRLQDELSAFFFEYDTPRMVLVRNKK. The helical transmembrane segment at 29 to 50 threads the bilayer; it reads VGVIFRLIQLVVLVYVIGWVFV. At 51-338 the chain is on the extracellular side; it reads YEKGYQTSSD…IPTMTTIGSG (288 aa). CTP contacts are provided by Lys68, Lys70, and Lys140. ATP is bound at residue Lys70. 3 cysteine pairs are disulfide-bonded: Cys117/Cys165, Cys126/Cys149, and Cys132/Cys159. Residues Asn153 and Asn184 are each glycosylated (N-linked (GlcNAc...) asparagine). Residue Thr186 participates in CTP binding. Residue Thr186 participates in ATP binding. Residue Asn210 is glycosylated (N-linked (GlcNAc...) asparagine). Cystine bridges form between Cys217–Cys227 and Cys261–Cys270. Positions 286, 290, and 292 each coordinate ATP. The CTP site is built by Asn290 and Arg292. An N-linked (GlcNAc...) asparagine glycan is attached at Asn300. Lys309 contacts CTP. Lys309 is an ATP binding site. The tract at residues 331–338 is pore-forming motif; the sequence is TMTTIGSG. The chain crosses the membrane as a helical span at residues 339-358; that stretch reads IGIFGVATVLCDLLLLHILP. The Cytoplasmic segment spans residues 359–399; the sequence is KRHYYKQKKFKYAEDMGPGEGEHDPVATSSTLGLQENMRTS. The segment at 374 to 399 is disordered; sequence MGPGEGEHDPVATSSTLGLQENMRTS. The segment covering 385–399 has biased composition (polar residues); it reads ATSSTLGLQENMRTS. Residues Ser387 and Ser388 each carry the phosphoserine modification. Thr389 carries the phosphothreonine modification.

This sequence belongs to the P2X receptor family. As to quaternary structure, functional P2XRs are organized as homomeric and heteromeric trimers. Homotrimer. Forms heterodimer with P2RX2. Forms heterodimer with P2RX4. Forms heterodimer with P2RX5. As to expression, high levels in vas deferens and urinary bladder. Lower extent in spinal cord, coeliac ganglion, lung and spleen (probably in the smooth muscle part of both organs).

It is found in the cell membrane. The catalysed reaction is Ca(2+)(in) = Ca(2+)(out). It carries out the reaction K(+)(in) = K(+)(out). The enzyme catalyses Na(+)(in) = Na(+)(out). Its activity is regulated as follows. Activated by low concentrations of ATP (&lt;1 uM). Undergoes rapid desensitisation. Sensitives to the ATP agonist:alpha/beta-methylene-ATP. Modulated by cholesterol. In terms of biological role, ATP-gated nonselective transmembrane cation channel permeable to potassium, sodium and with relatively high calcium permeability. Furthermore, CTP functions as a weak affinity agonist for P2RX1. Plays a role a role in urogenital, immune and cardiovascular function. Specifically, plays an important role in neurogenic contraction of smooth muscle of the vas deferens, and therefore is essential for normal male reproductive function. In addition, contributes to smooth muscle contractions of the urinary bladder. On platelets, contributes to platelet activation and aggregation and thereby, also to thrombosis. On neutrophils, it is involved in chemotaxis and in mitigating the activation of circulating cells. The polypeptide is P2X purinoceptor 1 (P2rx1) (Rattus norvegicus (Rat)).